A 281-amino-acid chain; its full sequence is 2-dehydro-3-deoxyphosphooctonate aldolase (281 aa).

Belongs to the KdsA family.

Its subcellular location is the cytoplasm. It catalyses the reaction D-arabinose 5-phosphate + phosphoenolpyruvate + H2O = 3-deoxy-alpha-D-manno-2-octulosonate-8-phosphate + phosphate. It functions in the pathway carbohydrate biosynthesis; 3-deoxy-D-manno-octulosonate biosynthesis; 3-deoxy-D-manno-octulosonate from D-ribulose 5-phosphate: step 2/3. The protein operates within bacterial outer membrane biogenesis; lipopolysaccharide biosynthesis. The sequence is that of 2-dehydro-3-deoxyphosphooctonate aldolase from Ectopseudomonas mendocina (strain ymp) (Pseudomonas mendocina).